The following is a 165-amino-acid chain: Large ribosomal subunit protein uL15 (165 aa).

Over residues 1–30 (MTNKKRRQRGSRTHGGGTHKNRRGAGHRGG) the composition is skewed to basic residues. Disordered stretches follow at residues 1–39 (MTNK…RAKH) and 137–165 (AGGE…DDEA). Residues 150-165 (AADESENTSDDEDDEA) are compositionally biased toward acidic residues.

It belongs to the universal ribosomal protein uL15 family. In terms of assembly, part of the 50S ribosomal subunit.

Functionally, binds to the 23S rRNA. The protein is Large ribosomal subunit protein uL15 of Halorubrum lacusprofundi (strain ATCC 49239 / DSM 5036 / JCM 8891 / ACAM 34).